A 102-amino-acid polypeptide reads, in one-letter code: Monothiol glutaredoxin-S7 (102 aa).

Residues 1–101 (MEKLQKMTSE…PMLKRVGALW (101 aa)) form the Glutaredoxin domain. Residue Cys-21 participates in [2Fe-2S] cluster binding. The short motif at 99 to 102 (ALWL) is the Responsive for interaction with TGA factors element.

The protein belongs to the glutaredoxin family. CC-type subfamily.

The protein localises to the cytoplasm. It localises to the nucleus. Functionally, may only reduce GSH-thiol disulfides, but not protein disulfides. The chain is Monothiol glutaredoxin-S7 (GRXS7) from Arabidopsis thaliana (Mouse-ear cress).